Here is a 301-residue protein sequence, read N- to C-terminus: PWI domain-containing protein C825.05c (301 aa).

One can recognise a PWI domain in the interval 26 to 137; that stretch reads STKFPASYDT…YGIPEKFILE (112 aa). S86 is subject to Phosphoserine. Composition is skewed to basic and acidic residues over residues 145-182, 189-205, and 215-229; these read LKDR…ERNG, TLDR…ERNR, and RFSE…DIRS. The interval 145-301 is disordered; sequence LKDRTEASKE…ESDSGTQKHD (157 aa). A Phosphoserine modification is found at S199. Positions 244 to 253 are enriched in basic residues; sequence PTRRRERHYR. Basic and acidic residues predominate over residues 254–289; the sequence is TRDDEGFDEFGRSRDGRWRESRTSYREKHRYDRDAL. The span at 290-301 shows a compositional bias: polar residues; the sequence is SSESDSGTQKHD. S291 bears the Phosphoserine mark.

The protein resides in the nucleus. This Schizosaccharomyces pombe (strain 972 / ATCC 24843) (Fission yeast) protein is PWI domain-containing protein C825.05c.